The primary structure comprises 339 residues: DNA-directed RNA polymerase subunit alpha (339 aa).

The interval 1 to 233 (MVREEVAGST…DLFLPFLHAE (233 aa)) is alpha N-terminal domain (alpha-NTD). The tract at residues 264–339 (KKGIPLNCIF…IDLLKNKLSF (76 aa)) is alpha C-terminal domain (alpha-CTD).

This sequence belongs to the RNA polymerase alpha chain family. In terms of assembly, in plastids the minimal PEP RNA polymerase catalytic core is composed of four subunits: alpha, beta, beta', and beta''. When a (nuclear-encoded) sigma factor is associated with the core the holoenzyme is formed, which can initiate transcription.

The protein resides in the plastid. It is found in the chloroplast. The enzyme catalyses RNA(n) + a ribonucleoside 5'-triphosphate = RNA(n+1) + diphosphate. DNA-dependent RNA polymerase catalyzes the transcription of DNA into RNA using the four ribonucleoside triphosphates as substrates. This Eremopyrum distans protein is DNA-directed RNA polymerase subunit alpha.